The primary structure comprises 303 residues: Putative ring-cleaving dioxygenase MhqE (303 aa).

VOC domains follow at residues 5–129 (GLHH…IMED) and 150–266 (GMKG…IATD). Positions 8, 215, and 262 each coordinate Fe cation.

This sequence belongs to the extradiol ring-cleavage dioxygenase family. It depends on Fe(2+) as a cofactor.

The protein resides in the cytoplasm. Its function is as follows. Putative ring-cleavage dioxygenase that may contribute to the degradation of aromatic compounds. In Bacillus subtilis (strain 168), this protein is Putative ring-cleaving dioxygenase MhqE (mhqE).